The chain runs to 379 residues: Dual-specificity RNA methyltransferase RlmN (379 aa).

The Proton acceptor role is filled by E90. Residues 96-348 form the Radical SAM core domain; the sequence is EPSRGTLCVS…TTVRKTRGDD (253 aa). A disulfide bridge links C103 with C353. [4Fe-4S] cluster is bound by residues C110, C114, and C117. Residues 179-180, S211, 233-235, and N310 each bind S-adenosyl-L-methionine; these read GE and SLH. Residue C353 is the S-methylcysteine intermediate of the active site.

The protein belongs to the radical SAM superfamily. RlmN family. It depends on [4Fe-4S] cluster as a cofactor.

The protein resides in the cytoplasm. It catalyses the reaction adenosine(2503) in 23S rRNA + 2 reduced [2Fe-2S]-[ferredoxin] + 2 S-adenosyl-L-methionine = 2-methyladenosine(2503) in 23S rRNA + 5'-deoxyadenosine + L-methionine + 2 oxidized [2Fe-2S]-[ferredoxin] + S-adenosyl-L-homocysteine. The enzyme catalyses adenosine(37) in tRNA + 2 reduced [2Fe-2S]-[ferredoxin] + 2 S-adenosyl-L-methionine = 2-methyladenosine(37) in tRNA + 5'-deoxyadenosine + L-methionine + 2 oxidized [2Fe-2S]-[ferredoxin] + S-adenosyl-L-homocysteine. Functionally, specifically methylates position 2 of adenine 2503 in 23S rRNA and position 2 of adenine 37 in tRNAs. m2A2503 modification seems to play a crucial role in the proofreading step occurring at the peptidyl transferase center and thus would serve to optimize ribosomal fidelity. This Nitrosomonas europaea (strain ATCC 19718 / CIP 103999 / KCTC 2705 / NBRC 14298) protein is Dual-specificity RNA methyltransferase RlmN.